The chain runs to 559 residues: Excitatory amino acid transporter 5 (559 aa).

Over 1-16 the chain is Cytoplasmic; sequence MVLDAVLARGRTVCKH. 3 helical membrane passes run 17 to 37, 60 to 80, and 94 to 114; these read NGLLILSVLSVIVGCLLGFFL, MLKMLILPLVVSSLMSGLASL, and AYYLWTTFLAVVVGIIMVSII. Residues 115–215 lie on the Extracellular side of the membrane; the sequence is HPGGAAQKET…EIVYKSEPGT (101 aa). A glycan (N-linked (GlcNAc...) asparagine) is linked at Asn190. Residues 216–236 traverse the membrane as a helical segment; that stretch reads SDGMNVLGIVIFSATMGIMLG. N-linked (GlcNAc...) asparagine glycosylation is present at Asn253. Transmembrane regions (helical) follow at residues 259 to 279, 298 to 318, 329 to 349, 371 to 391, 413 to 433, and 456 to 476; these read IVAVAGWYFPFGIVFLIAGKI, TVVCGLVVHGLLILPLLYFLI, GVLQALLIALATSSSSATLPI, VGATINMDGTALYEAVAAIFI, AASIGAAGIPQAGLVTMVIVL, and FRTMINVLGDALAAGIMAHIC.

Belongs to the dicarboxylate/amino acid:cation symporter (DAACS) (TC 2.A.23) family. SLC1A7 subfamily. In terms of assembly, interacts with the PDZ domains of DLG4. In terms of tissue distribution, expressed in retina, located in both cone and rod photoreceptor terminals and in axon terminals of rod bipolar cells.

It is found in the photoreceptor inner segment membrane. The protein resides in the synaptic cell membrane. It carries out the reaction K(+)(in) + L-glutamate(out) + 3 Na(+)(out) + H(+)(out) = K(+)(out) + L-glutamate(in) + 3 Na(+)(in) + H(+)(in). The enzyme catalyses K(+)(in) + L-aspartate(out) + 3 Na(+)(out) + H(+)(out) = K(+)(out) + L-aspartate(in) + 3 Na(+)(in) + H(+)(in). The catalysed reaction is D-aspartate(out) + K(+)(in) + 3 Na(+)(out) + H(+)(out) = D-aspartate(in) + K(+)(out) + 3 Na(+)(in) + H(+)(in). In terms of biological role, sodium-dependent, high-affinity amino acid transporter that mediates the uptake of L-glutamate and also L-aspartate and D-aspartate. Functions as a symporter that transports one amino acid molecule together with two or three Na(+) ions and one proton, in parallel with the counter-transport of one K(+) ion. Acts primarily as an inhibitory glutamate-gated chloride channel being a major inhibitory presynaptic receptor at mammalian rod bipolar cell axon terminals. Glutamate binding gates a large Cl(-) conductance that mediates inhibition, affecting visual processing in the retina. The chain is Excitatory amino acid transporter 5 from Mus musculus (Mouse).